Consider the following 657-residue polypeptide: Regulator of MON1-CCZ1 complex (657 aa).

Residues 471–637 (KKEMPHKFVI…NFTPGEHCEE (167 aa)) enclose the Mic1 domain.

The protein belongs to the RMC1 family. In terms of assembly, found in a complex with RMC1, CCZ1 MON1A and MON1B.

Its subcellular location is the lysosome membrane. The protein resides in the late endosome membrane. Functionally, component of the CCZ1-MON1 RAB7A guanine exchange factor (GEF). Acts as a positive regulator of CCZ1-MON1A/B function necessary for endosomal/autophagic flux and efficient RAB7A localization. The polypeptide is Regulator of MON1-CCZ1 complex (Homo sapiens (Human)).